A 502-amino-acid polypeptide reads, in one-letter code: Glycerol kinase (502 aa).

Threonine 14 contributes to the ADP binding site. Threonine 14, threonine 15, and serine 16 together coordinate ATP. Sn-glycerol 3-phosphate is bound at residue threonine 14. Residue arginine 18 participates in ADP binding. 4 residues coordinate sn-glycerol 3-phosphate: arginine 84, glutamate 85, tyrosine 136, and aspartate 246. Arginine 84, glutamate 85, tyrosine 136, aspartate 246, and glutamine 247 together coordinate glycerol. ADP is bound by residues threonine 268 and glycine 311. ATP contacts are provided by threonine 268, glycine 311, glutamine 315, and glycine 412. 2 residues coordinate ADP: glycine 412 and asparagine 416.

This sequence belongs to the FGGY kinase family. Homotetramer and homodimer (in equilibrium). Heterodimer with EIIA-Glc. Binds 1 zinc ion per glycerol kinase EIIA-Glc dimer. The zinc ion is important for dimerization.

It carries out the reaction glycerol + ATP = sn-glycerol 3-phosphate + ADP + H(+). It participates in polyol metabolism; glycerol degradation via glycerol kinase pathway; sn-glycerol 3-phosphate from glycerol: step 1/1. Its activity is regulated as follows. Activity of this regulatory enzyme is affected by several metabolites. Allosterically and non-competitively inhibited by fructose 1,6-bisphosphate (FBP) and unphosphorylated phosphocarrier protein EIIA-Glc (III-Glc), an integral component of the bacterial phosphotransferase (PTS) system. In terms of biological role, key enzyme in the regulation of glycerol uptake and metabolism. Catalyzes the phosphorylation of glycerol to yield sn-glycerol 3-phosphate. The sequence is that of Glycerol kinase from Shigella flexneri.